Reading from the N-terminus, the 698-residue chain is Putative transposon gamma-delta 80.3 kDa protein (698 aa).

The sequence is that of Putative transposon gamma-delta 80.3 kDa protein (tnpX) from Escherichia coli (strain K12).